Reading from the N-terminus, the 306-residue chain is Ribose-5-phosphate isomerase (306 aa).

Residues 45–68 form a disordered region; that stretch reads GRAQFGVGSTSTSSGDANSVCPAP. Polar residues predominate over residues 51–61; sequence VGSTSTSSGDA. Ser-102 carries the phosphoserine modification.

This sequence belongs to the ribose 5-phosphate isomerase family.

The enzyme catalyses aldehydo-D-ribose 5-phosphate = D-ribulose 5-phosphate. The protein operates within carbohydrate degradation; pentose phosphate pathway; D-ribose 5-phosphate from D-ribulose 5-phosphate (non-oxidative stage): step 1/1. The chain is Ribose-5-phosphate isomerase from Sus scrofa (Pig).